The sequence spans 897 residues: Protein translocase subunit SecA (897 aa).

ATP contacts are provided by residues Q87, 105-109 (GEGKT), and D512. Residues 846-897 (EEEQQKQARKKMVFNLVDEDETSEPSKSKKLAGRNEPCPCGSGKKYKKCCGK) are disordered. C883, C885, C894, and C895 together coordinate Zn(2+).

The protein belongs to the SecA family. In terms of assembly, monomer and homodimer. Part of the essential Sec protein translocation apparatus which comprises SecA, SecYEG and auxiliary proteins SecDF-YajC and YidC. Zn(2+) serves as cofactor.

Its subcellular location is the cell inner membrane. The protein resides in the cytoplasm. The enzyme catalyses ATP + H2O + cellular proteinSide 1 = ADP + phosphate + cellular proteinSide 2.. In terms of biological role, part of the Sec protein translocase complex. Interacts with the SecYEG preprotein conducting channel. Has a central role in coupling the hydrolysis of ATP to the transfer of proteins into and across the cell membrane, serving as an ATP-driven molecular motor driving the stepwise translocation of polypeptide chains across the membrane. This is Protein translocase subunit SecA from Geobacter sulfurreducens (strain ATCC 51573 / DSM 12127 / PCA).